Consider the following 862-residue polypeptide: Taxadiene synthase (862 aa).

5 residues coordinate Mg(2+): D613, D617, N757, T761, and E765. A DDXXD motif motif is present at residues 613–617; it reads DDMAD.

It belongs to the terpene synthase family. Mg(2+) serves as cofactor.

The enzyme catalyses (2E,6E,10E)-geranylgeranyl diphosphate = taxa-4(5),11(12)-diene + diphosphate. It participates in alkaloid biosynthesis; taxol biosynthesis; taxa-4(20),11-dien-5alpha-ol from geranylgeranyl diphosphate: step 1/2. Its function is as follows. Catalyzes the cyclization of the ubiquitous isoprenoid intermediate geranylgeranyl diphosphate to taxa-4,11-diene, the parent olefin with a taxane skeleton. The protein is Taxadiene synthase (TDC1) of Taxus baccata (English yew).